We begin with the raw amino-acid sequence, 849 residues long: Glycogen phosphorylase (849 aa).

K679 carries the N6-(pyridoxal phosphate)lysine modification.

It belongs to the glycogen phosphorylase family. Pyridoxal 5'-phosphate serves as cofactor.

It catalyses the reaction [(1-&gt;4)-alpha-D-glucosyl](n) + phosphate = [(1-&gt;4)-alpha-D-glucosyl](n-1) + alpha-D-glucose 1-phosphate. In terms of biological role, phosphorylase is an important allosteric enzyme in carbohydrate metabolism. Enzymes from different sources differ in their regulatory mechanisms and in their natural substrates. However, all known phosphorylases share catalytic and structural properties. The polypeptide is Glycogen phosphorylase (glgP) (Synechocystis sp. (strain ATCC 27184 / PCC 6803 / Kazusa)).